A 68-amino-acid polypeptide reads, in one-letter code: Conotoxin Eb11.7 (68 aa).

The signal sequence occupies residues 1 to 26 (MMFRLTSVSCFLLVIVCLNLFQVVLT). 4 disulfide bridges follow: cysteine 29–cysteine 43, cysteine 36–cysteine 48, cysteine 42–cysteine 52, and cysteine 47–cysteine 56. Phenylalanine amide is present on phenylalanine 60. Residues 64–68 (ATFQE) constitute a propeptide that is removed on maturation.

This sequence belongs to the conotoxin I2 superfamily. As to expression, expressed by the venom duct.

It is found in the secreted. The chain is Conotoxin Eb11.7 from Conus eburneus (Ivory cone).